Reading from the N-terminus, the 104-residue chain is Photosystem II reaction center Psb28 protein (104 aa).

Belongs to the Psb28 family. As to quaternary structure, part of the photosystem II complex.

The protein resides in the cellular thylakoid membrane. This is Photosystem II reaction center Psb28 protein from Synechococcus sp. (strain JA-3-3Ab) (Cyanobacteria bacterium Yellowstone A-Prime).